We begin with the raw amino-acid sequence, 140 residues long: Large ribosomal subunit protein uL16 (140 aa).

This sequence belongs to the universal ribosomal protein uL16 family. As to quaternary structure, part of the 50S ribosomal subunit.

Its function is as follows. Binds 23S rRNA and is also seen to make contacts with the A and possibly P site tRNAs. This is Large ribosomal subunit protein uL16 from Phytoplasma australiense.